Consider the following 59-residue polypeptide: Large ribosomal subunit protein bL32 (59 aa).

This sequence belongs to the bacterial ribosomal protein bL32 family.

This is Large ribosomal subunit protein bL32 from Mycoplasma capricolum subsp. capricolum (strain California kid / ATCC 27343 / NCTC 10154).